The following is a 225-amino-acid chain: UPF0725 protein At5g63820 (225 aa).

The protein belongs to the UPF0725 (EMB2204) family.

This Arabidopsis thaliana (Mouse-ear cress) protein is UPF0725 protein At5g63820.